The following is a 395-amino-acid chain: S-adenosylmethionine synthase 2 (395 aa).

Glu9 serves as a coordination point for Mg(2+). Position 15 (His15) interacts with ATP. Glu43 is a binding site for K(+). 2 residues coordinate L-methionine: Glu56 and Gln99. Residues 167-169 (DGK), 235-238 (SGRF), Asp246, 252-253 (RK), Ala269, Lys273, and Lys277 contribute to the ATP site. Position 246 (Asp246) interacts with L-methionine. Lys277 lines the L-methionine pocket.

Belongs to the AdoMet synthase family. In terms of assembly, homotetramer. It depends on Mn(2+) as a cofactor. Requires Mg(2+) as cofactor. Co(2+) serves as cofactor. The cofactor is K(+).

Its subcellular location is the cytoplasm. The enzyme catalyses L-methionine + ATP + H2O = S-adenosyl-L-methionine + phosphate + diphosphate. It participates in amino-acid biosynthesis; S-adenosyl-L-methionine biosynthesis; S-adenosyl-L-methionine from L-methionine: step 1/1. Catalyzes the formation of S-adenosylmethionine from methionine and ATP. The reaction comprises two steps that are both catalyzed by the same enzyme: formation of S-adenosylmethionine (AdoMet) and triphosphate, and subsequent hydrolysis of the triphosphate. This is S-adenosylmethionine synthase 2 (METK2) from Suaeda salsa (Seepweed).